The primary structure comprises 309 residues: D-alanine--D-alanine ligase (309 aa).

The 203-residue stretch at 104-306 (KLLWQSFNLP…YQILVQKILE (203 aa)) folds into the ATP-grasp domain. ATP is bound at residue 137 to 192 (ISLLGLPIIVKPNQEGSSIGITIVYSYETLYKACKTAFIFDNSILIEKFIYGEEYT). Mg(2+)-binding residues include aspartate 260, glutamate 273, and asparagine 275.

It belongs to the D-alanine--D-alanine ligase family. It depends on Mg(2+) as a cofactor. Mn(2+) serves as cofactor.

Its subcellular location is the cytoplasm. It carries out the reaction 2 D-alanine + ATP = D-alanyl-D-alanine + ADP + phosphate + H(+). Its pathway is cell wall biogenesis; peptidoglycan biosynthesis. Functionally, cell wall formation. In Buchnera aphidicola subsp. Baizongia pistaciae (strain Bp), this protein is D-alanine--D-alanine ligase.